The primary structure comprises 215 residues: Small ribosomal subunit protein bS6 (215 aa).

2 disordered regions span residues 121-153 and 187-215; these read RENN…QKPK and NQRQ…KDKQ. A compositionally biased stretch (basic and acidic residues) spans 144 to 153; it reads SRTEKAQKPK. Residues 188-198 are compositionally biased toward low complexity; sequence QRQNQQNNNNN. Basic and acidic residues predominate over residues 199–215; it reads RFDRNRNRQHNRFKDKQ.

Belongs to the bacterial ribosomal protein bS6 family.

In terms of biological role, binds together with bS18 to 16S ribosomal RNA. The protein is Small ribosomal subunit protein bS6 (rpsF) of Mycoplasma pneumoniae (strain ATCC 29342 / M129 / Subtype 1) (Mycoplasmoides pneumoniae).